Reading from the N-terminus, the 475-residue chain is Putative F-box protein At1g46840 (475 aa).

An F-box domain is found at 25–71 (TYVLEKLHIDLVIEILSRLSAKSIAICRCVSKQWNSLLVSQDFVESF). Residues 423-433 (SSYSTTRSYKS) are compositionally biased toward low complexity. Residues 423 to 475 (SSYSTTRSYKSSGKRCSDRSIGEDEQDDIGEKRGDQAAERRERSTKRGKHEVH) form a disordered region. Residues 451 to 464 (IGEKRGDQAAERRE) are compositionally biased toward basic and acidic residues. Residues 465 to 475 (RSTKRGKHEVH) show a composition bias toward basic residues.

This Arabidopsis thaliana (Mouse-ear cress) protein is Putative F-box protein At1g46840.